We begin with the raw amino-acid sequence, 429 residues long: Uterine milk protein (429 aa).

An N-terminal signal peptide occupies residues 1 to 25 (MSHRRMQLALSLVFILCGLFNSIFC). N-linked (GlcNAc...) asparagine glycans are attached at residues Asn-222 and Asn-268.

The protein belongs to the serpin family. UTMP subfamily. In terms of processing, glycosylated; carries the so-called mannose 6-phosphate lysosomal recognition marker on its carbohydrate chains. In terms of tissue distribution, secreted by ovine endometrium under the influence of progesterone.

In Ovis aries (Sheep), this protein is Uterine milk protein.